The sequence spans 384 residues: S-adenosylmethionine synthase (384 aa).

Histidine 15 serves as a coordination point for ATP. Aspartate 17 contacts Mg(2+). Glutamate 43 contacts K(+). L-methionine contacts are provided by glutamate 56 and glutamine 99. Positions 99-109 (QSPDINQGVDK) are flexible loop. ATP-binding positions include 164-166 (DAK), 230-231 (RF), aspartate 239, 245-246 (RK), alanine 262, and lysine 266. Aspartate 239 lines the L-methionine pocket. Lysine 270 contributes to the L-methionine binding site.

The protein belongs to the AdoMet synthase family. As to quaternary structure, homotetramer; dimer of dimers. The cofactor is Mg(2+). K(+) is required as a cofactor.

It is found in the cytoplasm. It catalyses the reaction L-methionine + ATP + H2O = S-adenosyl-L-methionine + phosphate + diphosphate. It participates in amino-acid biosynthesis; S-adenosyl-L-methionine biosynthesis; S-adenosyl-L-methionine from L-methionine: step 1/1. Functionally, catalyzes the formation of S-adenosylmethionine (AdoMet) from methionine and ATP. The overall synthetic reaction is composed of two sequential steps, AdoMet formation and the subsequent tripolyphosphate hydrolysis which occurs prior to release of AdoMet from the enzyme. This is S-adenosylmethionine synthase from Vibrio vulnificus (strain YJ016).